The following is a 391-amino-acid chain: F-box protein At2g34280 (391 aa).

Residues 1–43 (MDLLPYDVVEHILERLDVKSLLNCKSVSKQWRSTIRCRAFQER) enclose the F-box domain.

In Arabidopsis thaliana (Mouse-ear cress), this protein is F-box protein At2g34280.